The following is a 179-amino-acid chain: Alkyl hydroperoxide reductase AhpD (179 aa).

The Proton donor role is filled by C130. C130 and C133 are joined by a disulfide. The active-site Cysteine sulfenic acid (-SOH) intermediate is C133.

Belongs to the AhpD family. In terms of assembly, homotrimer.

It carries out the reaction N(6)-[(R)-dihydrolipoyl]-L-lysyl-[lipoyl-carrier protein] + a hydroperoxide = N(6)-[(R)-lipoyl]-L-lysyl-[lipoyl-carrier protein] + an alcohol + H2O. Its function is as follows. Antioxidant protein with alkyl hydroperoxidase activity. Required for the reduction of the AhpC active site cysteine residues and for the regeneration of the AhpC enzyme activity. This Nocardia farcinica (strain IFM 10152) protein is Alkyl hydroperoxide reductase AhpD.